The primary structure comprises 351 residues: Heat-inducible transcription repressor HrcA (351 aa).

Belongs to the HrcA family.

In terms of biological role, negative regulator of class I heat shock genes (grpE-dnaK-dnaJ and groELS operons). Prevents heat-shock induction of these operons. This chain is Heat-inducible transcription repressor HrcA, found in Fusobacterium nucleatum subsp. nucleatum (strain ATCC 25586 / DSM 15643 / BCRC 10681 / CIP 101130 / JCM 8532 / KCTC 2640 / LMG 13131 / VPI 4355).